A 131-amino-acid chain; its full sequence is Small ribosomal subunit protein uS8 (131 aa).

Belongs to the universal ribosomal protein uS8 family. In terms of assembly, part of the 30S ribosomal subunit. Contacts proteins S5 and S12.

One of the primary rRNA binding proteins, it binds directly to 16S rRNA central domain where it helps coordinate assembly of the platform of the 30S subunit. This chain is Small ribosomal subunit protein uS8, found in Chlorobium phaeovibrioides (strain DSM 265 / 1930) (Prosthecochloris vibrioformis (strain DSM 265)).